Consider the following 113-residue polypeptide: Small ribosomal subunit protein bS18 (113 aa).

The segment at 1 to 41 (MSEEKIVNTEAAPEAVAERPARAERSERPERPAKGPFGKKR) is disordered. Positions 16–33 (VAERPARAERSERPERPA) are enriched in basic and acidic residues.

Belongs to the bacterial ribosomal protein bS18 family. Part of the 30S ribosomal subunit. Forms a tight heterodimer with protein bS6.

In terms of biological role, binds as a heterodimer with protein bS6 to the central domain of the 16S rRNA, where it helps stabilize the platform of the 30S subunit. The sequence is that of Small ribosomal subunit protein bS18 from Elusimicrobium minutum (strain Pei191).